The following is a 442-amino-acid chain: C4-dicarboxylate transport protein (442 aa).

A run of 9 helical transmembrane segments spans residues Val13–Pro33, Gly49–Met69, Leu81–Val101, Ala149–Leu169, Met193–Ile213, Leu227–Ala247, Ile312–Leu332, Thr336–Phe356, and Ile357–Ile377.

This sequence belongs to the dicarboxylate/amino acid:cation symporter (DAACS) (TC 2.A.23) family.

The protein resides in the cell membrane. Functionally, responsible for the transport of dicarboxylates such as succinate, fumarate, and malate across the membrane. The polypeptide is C4-dicarboxylate transport protein (Polynucleobacter asymbioticus (strain DSM 18221 / CIP 109841 / QLW-P1DMWA-1) (Polynucleobacter necessarius subsp. asymbioticus)).